Reading from the N-terminus, the 445-residue chain is Gamma conglutin 2 (445 aa).

The N-terminal stretch at 1–33 is a signal peptide; that stretch reads MAQNMAPIFHFIAISLSCSFLFVLSSSQDSQSL. In terms of domain architecture, Peptidase A1 spans 60-425; that stretch reads HWANIHKRTP…DFAKSRVEFN (366 aa). Disulfide bonds link C88–C178, C102–C115, C107–C133, C118–C128, and C346–C387. N-linked (GlcNAc...) asparagine glycosylation is present at N130.

The protein belongs to the peptidase A1 family. In terms of assembly, two-subunit monomeric unit made of alpha and beta subunits coupled by disulfide bonds (at pH 4.5 and under non-reducing conditions). Can also form oligomers including dimer, tetramer and cyclic hexamer (trimer of dimers) (at pH &gt; 5.5). Component of globulins complexes which accumulate in seeds. Interacts with flavonoids (e.g. apigenin glucosides) present in globulins complexes. Glycosylated on alpha chain.

Its subcellular location is the secreted. The protein resides in the extracellular space. In terms of biological role, sulfur-rich seed storage protein that remains undegraded at germination. This is Gamma conglutin 2 from Lupinus angustifolius (Narrow-leaved blue lupine).